The following is a 1548-amino-acid chain: MLRAVALCVSVVLIALYTPTSGESSQSYPITTLINAKWTQTPLYLEIAEYLADEQAGLFWDYVSGVTKLDTVLNEYDTESQQYNAALELVKSHVSSPQLPLLRLVVSMHSLTPRIQTHFQLAEELRSSGSCQSFTFAQVGSELACSFNELQKKLEVPLAKDSLDASVVTYSFDHIFPGSENNTRTVVLYGDLGSSQFRTYHKLLEKEANAGRIRYILRHQLAKKDKRPVRLSGYGVELHLKSTEYKSQDDAPKPEAGSTSDEDLANESDVQGFDFKVLKQKHPTLKRALDQLRQRLLQGNDEIAQLKAWEFQDLGLQAAAAIAEIQGDETLQILQYTAHNFPMLARTLLAHKVTDGLRAEVKHNTEAFGRSLNVAPPDGALFINGLFFDADTMDLYSLIETLRSEMRVLESLHSNNVRGSLASSLLALDLTASSKKEFAIDIRDTAVQWVNDIENDVQYRRWPSSVMDLLRPTFPGMLRNIRKNVFNLVLVVDALQPTARSVIKLSESFVIHQAPIRLGLVFDARDANEDNLADYVAITCAYNYVSQKKDARAALSFLTDIYAAVGETKVVTKKDIVKQLTKEFTSLSFAKAEEFLEEDSTYDYGRELAAEFIQRLGFGDKGQPQALLNGVPMPSNVVTADSDFEEAIFTEIMTHTSNLQKAVYKGELTDNDVAIDYLMNQPHVMPRLNQRILSQEDVKYLDINGVAYKNLGNVGVLNRLSNRDMTATLMDNLKYFGGKKSTELIGRASLQFLTIWVFADLETDQGRDLLTHALDYVQSGESVRVAFIPNTESSSASSRRNLNRLVWAAMQSLPPTQATEQVLKWLKKPKEKIEIPTQLEDILGSTELHLKMLRVYSQRVLGLNKSQRLVIGNGRLYGPLSSDESFDSADFALLARFSSLQYSDKVRQVLKESAQDVNEEFNSDTLLKLYASLLPRQTKTRFKLPTDLKTDHSVVKLPPKQENLPHFDVAAVLDPASRAAQKLTPILILLRQVLNCQLNLYLIPVPQHSDMPVKNFYRYVVEPEVQFEANGGRSDGPLAKFSGLPANPLLTQQLQVPENWLVEAVRAVYDLDNIKLTDIGGPVHSEFDLEYLLLEGHCFDAASGAPPRGLQLVLGTQSQPTLVDTIVMANLGYFQLKANPGAWSLRLREGKSADIYAISHIEGTNTHHSAGSSEVQVLITSLRSHVVKLRVSKKPGMQQAELLSDDNEQAAQSGMWNSIASSFGGGSANQAATDEDTETINIFSVASGHLYERLLRIMMVSLLKHTKSPVKFWFLKNYLSPQFTDFLPHMASEYNFQYELVQYKWPRWLHQQTEKQRTIWGYKILFLDVLFPLNVRKIIFVDADAIVRTDIKELYDMDLGGAPYAYTPFCDSRKEMEGFRFWKQGYWRSHLMGRRYHISALYVVDLKRFRKIAAGDRLRGQYQALSQDPNSLSNLDQDLPNNMIHQVAIKSLPDDWLWCQTWCSDSNFKTAKVIDLCNNPQTKEAKLTAAQRIVPEWKDYDAELKTLMSRIEDHENSHSRDSAVDDSVDDSVEVTTVTPSHEPKHGEL.

A signal peptide spans 1-22; the sequence is MLRAVALCVSVVLIALYTPTSG. Asparagine 181 carries N-linked (GlcNAc...) asparagine glycosylation. The span at 243–253 shows a compositional bias: basic and acidic residues; that stretch reads TEYKSQDDAPK. The tract at residues 243 to 265 is disordered; sequence TEYKSQDDAPKPEAGSTSDEDLA. Residues asparagine 266 and asparagine 864 are each glycosylated (N-linked (GlcNAc...) asparagine). Residues 1227–1548 form a glucosyltransferase region; sequence SANQAATDED…PSHEPKHGEL (322 aa). The span at 1512–1523 shows a compositional bias: basic and acidic residues; sequence EDHENSHSRDSA. A disordered region spans residues 1512 to 1548; it reads EDHENSHSRDSAVDDSVDDSVEVTTVTPSHEPKHGEL. A Prevents secretion from ER motif is present at residues 1545 to 1548; sequence HGEL.

This sequence belongs to the glycosyltransferase 8 family. As to quaternary structure, monomer. May interact with CG7484/Sep15. It depends on Ca(2+) as a cofactor. Mn(2+) is required as a cofactor.

The protein resides in the endoplasmic reticulum lumen. It localises to the endoplasmic reticulum-Golgi intermediate compartment. It catalyses the reaction N(4)-(alpha-D-Man-(1-&gt;2)-alpha-D-Man-(1-&gt;2)-alpha-D-Man-(1-&gt;3)-[alpha-D-Man-(1-&gt;2)-alpha-D-Man-(1-&gt;3)-[alpha-D-Man-(1-&gt;2)-alpha-D-Man-(1-&gt;6)]-alpha-D-Man-(1-&gt;6)]-beta-D-Man-(1-&gt;4)-beta-D-GlcNAc-(1-&gt;4)-beta-D-GlcNAc)-L-asparaginyl-[protein] (N-glucan mannose isomer 9A1,2,3B1,2,3) + UDP-alpha-D-glucose = N(4)-(alpha-D-Glc-(1-&gt;3)-alpha-D-Man-(1-&gt;2)-alpha-D-Man-(1-&gt;2)-alpha-D-Man-(1-&gt;3)-[alpha-D-Man-(1-&gt;2)-alpha-D-Man-(1-&gt;3)-[alpha-D-Man-(1-&gt;2)-alpha-D-Man-(1-&gt;6)]-alpha-D-Man-(1-&gt;6)]-beta-D-Man-(1-&gt;4)-beta-D-GlcNAc-(1-&gt;4)-beta-D-GlcNAc)-L-asparaginyl-[protein] + UDP + H(+). It functions in the pathway protein modification; protein glycosylation. Its function is as follows. Recognizes glycoproteins with minor folding defects. Reglucosylates single N-glycans near the misfolded part of the protein, thus providing quality control for protein folding in the endoplasmic reticulum. Reglucosylated proteins are recognized by calreticulin for recycling to the endoplasmic reticulum and refolding or degradation. This is UDP-glucose:glycoprotein glucosyltransferase from Drosophila melanogaster (Fruit fly).